Consider the following 496-residue polypeptide: Proline--tRNA ligase (496 aa).

This sequence belongs to the class-II aminoacyl-tRNA synthetase family. ProS type 3 subfamily. As to quaternary structure, homodimer.

The protein resides in the cytoplasm. It catalyses the reaction tRNA(Pro) + L-proline + ATP = L-prolyl-tRNA(Pro) + AMP + diphosphate. Catalyzes the attachment of proline to tRNA(Pro) in a two-step reaction: proline is first activated by ATP to form Pro-AMP and then transferred to the acceptor end of tRNA(Pro). This chain is Proline--tRNA ligase, found in Phocaeicola vulgatus (strain ATCC 8482 / DSM 1447 / JCM 5826 / CCUG 4940 / NBRC 14291 / NCTC 11154) (Bacteroides vulgatus).